Reading from the N-terminus, the 363-residue chain is Peptide chain release factor 2 (363 aa).

Gln251 bears the N5-methylglutamine mark.

The protein belongs to the prokaryotic/mitochondrial release factor family. In terms of processing, methylated by PrmC. Methylation increases the termination efficiency of RF2.

It is found in the cytoplasm. In terms of biological role, peptide chain release factor 2 directs the termination of translation in response to the peptide chain termination codons UGA and UAA. The polypeptide is Peptide chain release factor 2 (Helicobacter pylori (strain HPAG1)).